The following is a 230-amino-acid chain: Ribonuclease 3 (230 aa).

The RNase III domain occupies 1 to 134; the sequence is MKQLEELLST…FLGALLLDKG (134 aa). E47 provides a ligand contact to Mg(2+). D51 is a catalytic residue. Mg(2+) is bound by residues D120 and E123. E123 is a catalytic residue. A DRBM domain is found at 160–229; sequence DYKTCLQEFL…AKNALAQLSE (70 aa).

This sequence belongs to the ribonuclease III family. As to quaternary structure, homodimer. It depends on Mg(2+) as a cofactor.

The protein localises to the cytoplasm. It catalyses the reaction Endonucleolytic cleavage to 5'-phosphomonoester.. Digests double-stranded RNA. Involved in the processing of primary rRNA transcript to yield the immediate precursors to the large and small rRNAs (23S and 16S). Processes some mRNAs, and tRNAs when they are encoded in the rRNA operon. Processes pre-crRNA and tracrRNA of type II CRISPR loci if present in the organism. This Streptococcus pyogenes serotype M3 (strain SSI-1) protein is Ribonuclease 3.